The sequence spans 85 residues: MNLPLLLLITILIEIHALKDGYVIYKNSNCKYSCNINEKWKYCSPLCQKKHGKTGYCYFFACWCTDLPNDVPIYGETGSYCWSNK.

The signal sequence occupies residues 1-17; that stretch reads MNLPLLLLITILIEIHA. In terms of domain architecture, LCN-type CS-alpha/beta spans 19-82; the sequence is KDGYVIYKNS…IYGETGSYCW (64 aa). Cystine bridges form between Cys30-Cys81, Cys34-Cys57, Cys43-Cys62, and Cys47-Cys64.

It belongs to the long (4 C-C) scorpion toxin superfamily. Sodium channel inhibitor family. As to expression, expressed by the venom gland.

The protein resides in the secreted. In terms of biological role, putative sodium channel toxin. In Tityus serrulatus (Brazilian scorpion), this protein is Putative sodium channel toxin Ts34.